The primary structure comprises 346 residues: Phosphoribosylformylglycinamidine cyclo-ligase (346 aa).

It belongs to the AIR synthase family.

It localises to the cytoplasm. It catalyses the reaction 2-formamido-N(1)-(5-O-phospho-beta-D-ribosyl)acetamidine + ATP = 5-amino-1-(5-phospho-beta-D-ribosyl)imidazole + ADP + phosphate + H(+). It participates in purine metabolism; IMP biosynthesis via de novo pathway; 5-amino-1-(5-phospho-D-ribosyl)imidazole from N(2)-formyl-N(1)-(5-phospho-D-ribosyl)glycinamide: step 2/2. This chain is Phosphoribosylformylglycinamidine cyclo-ligase, found in Shewanella halifaxensis (strain HAW-EB4).